The primary structure comprises 163 residues: Phosphopantetheine adenylyltransferase (163 aa).

Threonine 11 is a substrate binding site. ATP contacts are provided by residues 11–12 (TF) and histidine 19. Substrate contacts are provided by lysine 43, leucine 75, and arginine 89. ATP contacts are provided by residues 90–92 (GLR), glutamate 100, and 125–131 (YSFISST).

This sequence belongs to the bacterial CoaD family. As to quaternary structure, homohexamer. Mg(2+) is required as a cofactor.

The protein localises to the cytoplasm. The catalysed reaction is (R)-4'-phosphopantetheine + ATP + H(+) = 3'-dephospho-CoA + diphosphate. Its pathway is cofactor biosynthesis; coenzyme A biosynthesis; CoA from (R)-pantothenate: step 4/5. Reversibly transfers an adenylyl group from ATP to 4'-phosphopantetheine, yielding dephospho-CoA (dPCoA) and pyrophosphate. This chain is Phosphopantetheine adenylyltransferase, found in Acinetobacter baylyi (strain ATCC 33305 / BD413 / ADP1).